Consider the following 382-residue polypeptide: Lipid-A-disaccharide synthase (382 aa).

This sequence belongs to the LpxB family.

The catalysed reaction is 2-N,3-O-bis[(3R)-3-hydroxytetradecanoyl]-alpha-D-glucosaminyl 1-phosphate + UDP-2-N,3-O-bis[(3R)-3-hydroxytetradecanoyl]-alpha-D-glucosamine = lipid A disaccharide (E. coli) + UDP + H(+). The enzyme catalyses a lipid X + a UDP-2-N,3-O-bis[(3R)-3-hydroxyacyl]-alpha-D-glucosamine = a lipid A disaccharide + UDP + H(+). It participates in glycolipid biosynthesis; lipid IV(A) biosynthesis; lipid IV(A) from (3R)-3-hydroxytetradecanoyl-[acyl-carrier-protein] and UDP-N-acetyl-alpha-D-glucosamine: step 5/6. Functionally, condensation of UDP-2,3-diacylglucosamine and 2,3-diacylglucosamine-1-phosphate to form lipid A disaccharide, a precursor of lipid A, a phosphorylated glycolipid that anchors the lipopolysaccharide to the outer membrane of the cell. This is Lipid-A-disaccharide synthase from Salmonella agona (strain SL483).